Reading from the N-terminus, the 1755-residue chain is Transposon Ty1-DR1 Gag-Pol polyprotein (1755 aa).

Polar residues-rich tracts occupy residues Met-1 to Pro-10, Thr-48 to Ser-60, and Gln-127 to Phe-152. Disordered regions lie at residues Met-1–Gln-93, Pro-126–Pro-173, and Gly-352–Thr-421. Low complexity predominate over residues Thr-153–Thr-165. The tract at residues Asn-299–His-401 is RNA-binding. Residues Asn-402–Ser-418 are compositionally biased toward low complexity. The residue at position 416 (Ser-416) is a Phosphoserine. Asp-461 functions as the For protease activity; shared with dimeric partner in the catalytic mechanism. The tract at residues Asn-583–Cys-640 is integrase-type zinc finger-like. In terms of domain architecture, Integrase catalytic spans Asn-660–Pro-835. Residues Asp-671 and Asp-736 each contribute to the Mg(2+) site. 3 disordered regions span residues Ser-956 to Lys-1087, Arg-1092 to Pro-1111, and Asp-1130 to Thr-1187. Over residues Ser-960 to Thr-969 the composition is skewed to low complexity. The span at Ser-1005–Thr-1015 shows a compositional bias: polar residues. Residues Glu-1038–Ser-1053 are compositionally biased toward basic and acidic residues. Polar residues-rich tracts occupy residues Tyr-1054–Asp-1082 and Pro-1101–Pro-1111. The Bipartite nuclear localization signal motif lies at Lys-1178–Arg-1212. In terms of domain architecture, Reverse transcriptase Ty1/copia-type spans Asn-1338–Gln-1476. Mg(2+) is bound by residues Asp-1346, Asp-1427, Asp-1428, Asp-1610, Glu-1652, and Asp-1685. The 143-residue stretch at Asp-1610–Lys-1752 folds into the RNase H Ty1/copia-type domain.

As to quaternary structure, the capsid protein forms a homotrimer, from which the VLPs are assembled. The protease is a homodimer, whose active site consists of two apposed aspartic acid residues. Initially, virus-like particles (VLPs) are composed of the structural unprocessed proteins Gag and Gag-Pol, and also contain the host initiator methionine tRNA (tRNA(i)-Met) which serves as a primer for minus-strand DNA synthesis, and a dimer of genomic Ty RNA. Processing of the polyproteins occurs within the particle and proceeds by an ordered pathway, called maturation. First, the protease (PR) is released by autocatalytic cleavage of the Gag-Pol polyprotein yielding capsid protein p45 and a Pol-p154 precursor protein. This cleavage is a prerequisite for subsequent processing of Pol-p154 at the remaining sites to release the mature structural and catalytic proteins. Maturation takes place prior to the RT reaction and is required to produce transposition-competent VLPs.

It localises to the cytoplasm. The protein localises to the nucleus. The catalysed reaction is DNA(n) + a 2'-deoxyribonucleoside 5'-triphosphate = DNA(n+1) + diphosphate. The enzyme catalyses Endonucleolytic cleavage to 5'-phosphomonoester.. Its function is as follows. Capsid protein (CA) is the structural component of the virus-like particle (VLP), forming the shell that encapsulates the retrotransposons dimeric RNA genome. The particles are assembled from trimer-clustered units and there are holes in the capsid shells that allow for the diffusion of macromolecules. CA also has nucleocapsid-like chaperone activity, promoting primer tRNA(i)-Met annealing to the multipartite primer-binding site (PBS), dimerization of Ty1 RNA and initiation of reverse transcription. Functionally, the aspartyl protease (PR) mediates the proteolytic cleavages of the Gag and Gag-Pol polyproteins after assembly of the VLP. In terms of biological role, reverse transcriptase/ribonuclease H (RT) is a multifunctional enzyme that catalyzes the conversion of the retro-elements RNA genome into dsDNA within the VLP. The enzyme displays a DNA polymerase activity that can copy either DNA or RNA templates, and a ribonuclease H (RNase H) activity that cleaves the RNA strand of RNA-DNA heteroduplexes during plus-strand synthesis and hydrolyzes RNA primers. The conversion leads to a linear dsDNA copy of the retrotransposon that includes long terminal repeats (LTRs) at both ends. Integrase (IN) targets the VLP to the nucleus, where a subparticle preintegration complex (PIC) containing at least integrase and the newly synthesized dsDNA copy of the retrotransposon must transit the nuclear membrane. Once in the nucleus, integrase performs the integration of the dsDNA into the host genome. In Saccharomyces cerevisiae (strain ATCC 204508 / S288c) (Baker's yeast), this protein is Transposon Ty1-DR1 Gag-Pol polyprotein (TY1B-DR1).